A 433-amino-acid chain; its full sequence is Inositol hexakisphosphate kinase 1 (433 aa).

A disordered region spans residues 100–160; that stretch reads ETVEQDDTPE…SPKVELHSHS (61 aa). The span at 113–123 shows a compositional bias: basic residues; it reads PRRKHSRRSLH. Residues 139-149 are compositionally biased toward polar residues; that stretch reads SFETSESSQEA. Basic and acidic residues predominate over residues 150-160; the sequence is KSPKVELHSHS. A Phosphoserine modification is found at serine 151. A substrate-binding site is contributed by 220–228; sequence PCVLDLKMG. Residues 359–383 form a disordered region; that stretch reads EVPPPCGPSTSPSSTSLEAGPSSPP.

Belongs to the inositol phosphokinase (IPK) family. As to expression, highly expressed in brain and testis. Detected at much lower levels in heart, kidney, liver, lung and spleen.

The protein resides in the cytoplasm. It localises to the nucleus. It carries out the reaction 1D-myo-inositol hexakisphosphate + ATP = 5-diphospho-1D-myo-inositol 1,2,3,4,6-pentakisphosphate + ADP. It catalyses the reaction 1-diphospho-1D-myo-inositol 2,3,4,5,6-pentakisphosphate + ATP + H(+) = 1,5-bis(diphospho)-1D-myo-inositol 2,3,4,6-tetrakisphosphate + ADP. Converts inositol hexakisphosphate (InsP6) to diphosphoinositol pentakisphosphate (InsP7/PP-InsP5). Converts 1,3,4,5,6-pentakisphosphate (InsP5) to PP-InsP4. In Mus musculus (Mouse), this protein is Inositol hexakisphosphate kinase 1 (Ip6k1).